The primary structure comprises 1755 residues: Transposon Ty1-MR2 Gag-Pol polyprotein (1755 aa).

3 stretches are compositionally biased toward polar residues: residues 1–10, 48–60, and 127–152; these read MESQQLSNYP, TKAN…TPAS, and QSQF…GNTF. Disordered stretches follow at residues 1–93, 126–173, and 352–421; these read MESQ…MMTQ, PQSQ…RPPP, and GSRN…SKST. The span at 153-165 shows a compositional bias: low complexity; sequence TDSSSADSDMTST. An RNA-binding region spans residues 299–401; sequence NNGIHINNKV…NSKSKTARAH (103 aa). A compositionally biased stretch (low complexity) spans 402–418; sequence NVSTSNNSPSTDNDSIS. Position 416 is a phosphoserine (serine 416). Aspartate 461 acts as the For protease activity; shared with dimeric partner in catalysis. The segment at 583–640 is integrase-type zinc finger-like; the sequence is NVHTSESTRKYPYPFIHRMLAHANAQTIRYSLKNNTITYFNESDVDWSSAIDYQCPDC. Residues 660–835 enclose the Integrase catalytic domain; the sequence is NSYEPFQYLH…AGLDISTLLP (176 aa). Positions 671 and 736 each coordinate Mg(2+). Disordered regions lie at residues 956-1087, 1092-1111, and 1130-1186; these read SKAV…ETEK, RSPS…NIVP, and DLPL…EDNE. Low complexity predominate over residues 960 to 969; it reads SPTDSTPPST. The segment covering 1005–1015 has biased composition (polar residues); the sequence is STPQISNIEST. Basic and acidic residues predominate over residues 1038 to 1053; the sequence is ESSHASKSKDFRHSDS. Composition is skewed to polar residues over residues 1054-1082 and 1101-1111; these read YSEN…QISD and PENNSSHNIVP. The short motif at 1178-1212 is the Bipartite nuclear localization signal element; sequence KKRSLEDNETEIKVSRDTWNTKNMRSLEPPRSKKR. Residues 1338 to 1476 form the Reverse transcriptase Ty1/copia-type domain; sequence NNYYITQLDI…DILGLEIKYQ (139 aa). Mg(2+) is bound by residues aspartate 1346, aspartate 1427, aspartate 1428, aspartate 1610, glutamate 1652, and aspartate 1685. An RNase H Ty1/copia-type domain is found at 1610-1752; that stretch reads DASYGNQPYY…IKTFKLLTNK (143 aa).

As to quaternary structure, the capsid protein forms a homotrimer, from which the VLPs are assembled. The protease is a homodimer, whose active site consists of two apposed aspartic acid residues. In terms of processing, initially, virus-like particles (VLPs) are composed of the structural unprocessed proteins Gag and Gag-Pol, and also contain the host initiator methionine tRNA (tRNA(i)-Met) which serves as a primer for minus-strand DNA synthesis, and a dimer of genomic Ty RNA. Processing of the polyproteins occurs within the particle and proceeds by an ordered pathway, called maturation. First, the protease (PR) is released by autocatalytic cleavage of the Gag-Pol polyprotein yielding capsid protein p45 and a Pol-p154 precursor protein. This cleavage is a prerequisite for subsequent processing of Pol-p154 at the remaining sites to release the mature structural and catalytic proteins. Maturation takes place prior to the RT reaction and is required to produce transposition-competent VLPs.

It localises to the cytoplasm. The protein localises to the nucleus. The enzyme catalyses DNA(n) + a 2'-deoxyribonucleoside 5'-triphosphate = DNA(n+1) + diphosphate. It catalyses the reaction Endonucleolytic cleavage to 5'-phosphomonoester.. Its function is as follows. Capsid protein (CA) is the structural component of the virus-like particle (VLP), forming the shell that encapsulates the retrotransposons dimeric RNA genome. The particles are assembled from trimer-clustered units and there are holes in the capsid shells that allow for the diffusion of macromolecules. CA also has nucleocapsid-like chaperone activity, promoting primer tRNA(i)-Met annealing to the multipartite primer-binding site (PBS), dimerization of Ty1 RNA and initiation of reverse transcription. In terms of biological role, the aspartyl protease (PR) mediates the proteolytic cleavages of the Gag and Gag-Pol polyproteins after assembly of the VLP. Reverse transcriptase/ribonuclease H (RT) is a multifunctional enzyme that catalyzes the conversion of the retro-elements RNA genome into dsDNA within the VLP. The enzyme displays a DNA polymerase activity that can copy either DNA or RNA templates, and a ribonuclease H (RNase H) activity that cleaves the RNA strand of RNA-DNA heteroduplexes during plus-strand synthesis and hydrolyzes RNA primers. The conversion leads to a linear dsDNA copy of the retrotransposon that includes long terminal repeats (LTRs) at both ends. Functionally, integrase (IN) targets the VLP to the nucleus, where a subparticle preintegration complex (PIC) containing at least integrase and the newly synthesized dsDNA copy of the retrotransposon must transit the nuclear membrane. Once in the nucleus, integrase performs the integration of the dsDNA into the host genome. The polypeptide is Transposon Ty1-MR2 Gag-Pol polyprotein (TY1B-MR2) (Saccharomyces cerevisiae (strain ATCC 204508 / S288c) (Baker's yeast)).